A 1138-amino-acid polypeptide reads, in one-letter code: MEVVDETEALQRFFEGHDISGALEPSNIDTSILEEYIGKEDASDLCFPEISAPASTASFPHGPPAIPGSSGLHHLSPPGSGPSPGRHGPLPPPTYGTPLNCNNNNGMGTAPKPFLGGSGPPIKAEPKAPYAPGTLPDSPPDSGSEAYSPQQVNDPHLLRTITPETLCHVGVSSRLEHPPPPPAHLPGPPPPPPPPPHYPVLQRDLYMKAEPPVPPYAAMGPGLVPPELHHTQQTQVLHQLLQQHGAELPPHPSKKRKHSESPPNTLNAQMLNGMIKQEPGTVTALPPHPARAPSPPWPPQGPLSPGTGSLPLSIARAQTPPWHPPGAPSPGLLQDSDSLSGSYLDPNYQSIKWQPHQQNKWATLYDANYKELPMLTYRVDADKGFNFSVGDDAFVCQKKNHFQVTVYIGMLGEPKYVKTPEGLKPLDCFYLKLHGVKLEALNQSINIEQSQSDRSKRPFNPVTVNLPPEQVTKVTVGRLHFSETTANNMRKKGKPNPDQRYFMLVVALQAHAQNQNYTLAAQISERIIVRASNPGQFESDSDVLWQRAQLPDTVFHHGRVGINTDRPDEALVVHGNVKVMGSLMHPSDLRAKEHVQEVDTTEQLKRISRMRLVHYRYKPEFAASAGIEATAPETGVIAQEVKEILPEAVKDTGDVVFANGKTIENFLVVNKERIFMENVGAVKELCKLTDNLETRIDELERWSHKLAKLRRLDSLKSTGSSGAFSHAGSQFSRAGSVPHKKRPPKLANKSSPAVPDQACISQRFLQGTIIALVVVMAFSVVSMSTLYVLSLRSEEDLVDADGSLAVSTSCLLALLRPQDPGGSEAMCPWSSQSFGTTQLRQSSMTTGLPGTQPSLLLVTKSASGPALRALDLCSSQPCPIVCCSPPVSSPATDPALGPTLTPTPSPSSNPKHSGPGQMAPLPVTNIRAKSWGISANGISYSKHSKSLEPLASPVVPFPGGQSKTKNSPSFNLQSRARRGAPQPSPSPAQFTQTQGQLDPAPSLTSIQLLENSMPITSQYCVPEGACRLGNFTYHIPVSSSTPLHLSLTLQMNSSTPVSVVLCSLTSEEEPCEEGGFLQRFHPHQDTQGTSHQWPVTILSFREFTYHFRVTLLGQANCSSEAIVQPATDYYFHFYRLCD.

At 1–768 (MEVVDETEAL…CISQRFLQGT (768 aa)) the chain is on the cytoplasmic side. 4 disordered regions span residues 56–150 (TASF…YSPQ), 171–200 (VSSRLEHPPPPPAHLPGPPPPPPPPPHYPV), 246–267 (AELPPHPSKKRKHSESPPNTLN), and 279–339 (PGTV…SDSL). The segment covering 67 to 88 (PGSSGLHHLSPPGSGPSPGRHG) has biased composition (low complexity). An N6-acetyllysine modification is found at K123. Pro residues predominate over residues 178–198 (PPPPPAHLPGPPPPPPPPPHY). The segment at residues 250–541 (PHPSKKRKHS…SNPGQFESDS (292 aa)) is a DNA-binding region (NDT80). A Nuclear localization signal motif is present at residues 254 to 257 (KKRK). Residues 286 to 302 (PPHPARAPSPPWPPQGP) show a composition bias toward pro residues. Over residues 329-339 (SPGLLQDSDSL) the composition is skewed to low complexity. Positions 491–494 (KKGK) match the Nuclear localization signal motif. The region spanning 587 to 696 (SDLRAKEHVQ…KLTDNLETRI (110 aa)) is the Peptidase S74 domain. Residues 680 to 711 (GAVKELCKLTDNLETRIDELERWSHKLAKLRR) adopt a coiled-coil conformation. Over residues 721-733 (SGAFSHAGSQFSR) the composition is skewed to polar residues. The segment at 721-753 (SGAFSHAGSQFSRAGSVPHKKRPPKLANKSSPA) is disordered. A required for interaction with TMEM98 region spans residues 765–1003 (LQGTIIALVV…QGQLDPAPSL (239 aa)). The chain crosses the membrane as a helical span at residues 769-789 (IIALVVVMAFSVVSMSTLYVL). Topologically, residues 790–1138 (SLRSEEDLVD…YYFHFYRLCD (349 aa)) are lumenal. Over residues 891 to 900 (ATDPALGPTL) the composition is skewed to low complexity. Disordered regions lie at residues 891-922 (ATDPALGPTLTPTPSPSSNPKHSGPGQMAPLP) and 951-999 (ASPV…QLDP). Composition is skewed to polar residues over residues 961 to 974 (QSKTKNSPSFNLQS) and 987 to 999 (PAQFTQTQGQLDP). N-linked (GlcNAc...) asparagine glycans are attached at residues N1030, N1052, and N1116.

This sequence belongs to the MRF family. As to quaternary structure, homotrimer. Interacts (via C-terminal region) with TMEM98; the interaction inhibits MYRF self-cleavage. Post-translationally, glycosylated. In terms of processing, follows autocatalytic cleavage via the peptidase S74 domain. Autoprocessing is apparently constitutive and is essential for transcriptional activity. Autocatalytic cleavage is inhibited by interaction with TMEM98. As to expression, specifically expressed by postmitotic oligodendrocytes in the CNS. Not detected in the peripheral nervous system (PNS).

It is found in the endoplasmic reticulum membrane. Its subcellular location is the nucleus. The protein localises to the cytoplasm. In terms of biological role, constitutes a precursor of the transcription factor. Mediates the autocatalytic cleavage that releases the Myelin regulatory factor, N-terminal component that specifically activates transcription of central nervous system (CNS) myelin genes. Functionally, membrane-bound part that has no transcription factor activity and remains attached to the endoplasmic reticulum membrane following cleavage. Its function is as follows. Transcription factor that specifically activates expression of myelin genes such as MBP, MOG, MAG, DUSP15 and PLP1 during oligodendrocyte (OL) maturation, thereby playing a central role in oligodendrocyte maturation and CNS myelination. Specifically recognizes and binds DNA sequence 5'-CTGGYAC-3' in the regulatory regions of myelin-specific genes and directly activates their expression. Not only required during oligodendrocyte differentiation but is also required on an ongoing basis for the maintenance of expression of myelin genes and for the maintenance of a mature, viable oligodendrocyte phenotype. The sequence is that of Myelin regulatory factor (Myrf) from Mus musculus (Mouse).